The chain runs to 394 residues: Elongation factor Tu-A (394 aa).

In terms of domain architecture, tr-type G spans Lys10–Glu204. A G1 region spans residues Gly19–Thr26. A GTP-binding site is contributed by Gly19–Thr26. Thr26 is a binding site for Mg(2+). A G2 region spans residues Gly60–Asn64. The tract at residues Asp81 to Gly84 is G3. GTP is bound by residues Asp81–His85 and Asn136–Asp139. Residues Asn136–Asp139 are G4. Residues Ser174 to Leu176 form a G5 region.

It belongs to the TRAFAC class translation factor GTPase superfamily. Classic translation factor GTPase family. EF-Tu/EF-1A subfamily. Monomer.

It localises to the cytoplasm. It carries out the reaction GTP + H2O = GDP + phosphate + H(+). Its function is as follows. GTP hydrolase that promotes the GTP-dependent binding of aminoacyl-tRNA to the A-site of ribosomes during protein biosynthesis. This chain is Elongation factor Tu-A, found in Vibrio cholerae serotype O1 (strain ATCC 39315 / El Tor Inaba N16961).